Reading from the N-terminus, the 692-residue chain is Protein arginine N-methyltransferase 7 (692 aa).

SAM-dependent MTase PRMT-type domains are found at residues 14–359 (ENSW…YSLW) and 368–692 (AKTV…QEKR).

It belongs to the class I-like SAM-binding methyltransferase superfamily. Protein arginine N-methyltransferase family. PRMT7 subfamily.

In terms of biological role, essential arginine methyltransferase that can both catalyze the formation of omega-N monomethylarginine (MMA) and symmetrical dimethylarginine (sDMA). Specifically mediates the symmetrical dimethylation of arginine residues in the small nuclear ribonucleoproteins SmD1 and SmD3. The sequence is that of Protein arginine N-methyltransferase 7 (Art7) from Drosophila persimilis (Fruit fly).